The following is a 461-amino-acid chain: tRNA-splicing endonuclease subunit Sen2 (461 aa).

Disordered regions lie at residues 140-176 (GAEQ…TSSP) and 190-210 (GDPA…DVKE). Positions 144–176 (TGDSCDTVCPNTENTELSGQSSTDTGNIATSSP) are enriched in polar residues. Positions 201–210 (KEQEPADVKE) are enriched in basic and acidic residues. Active-site residues include Tyr-365, His-373, and Lys-412.

It belongs to the tRNA-intron endonuclease family. As to quaternary structure, tRNA splicing endonuclease is a heterotetramer composed of SEN2, SEN15, SEN34/LENG5 and SEN54.

It localises to the nucleus. The catalysed reaction is pretRNA = a 3'-half-tRNA molecule with a 5'-OH end + a 5'-half-tRNA molecule with a 2',3'-cyclic phosphate end + an intron with a 2',3'-cyclic phosphate and a 5'-hydroxyl terminus.. Its function is as follows. Constitutes one of the two catalytic subunit of the tRNA-splicing endonuclease complex, a complex responsible for identification and cleavage of the splice sites in pre-tRNA. It cleaves pre-tRNA at the 5'- and 3'-splice sites to release the intron. The products are an intron and two tRNA half-molecules bearing 2',3'-cyclic phosphate and 5'-OH termini. There are no conserved sequences at the splice sites, but the intron is invariably located at the same site in the gene, placing the splice sites an invariant distance from the constant structural features of the tRNA body. Probably carries the active site for 5'-splice site cleavage. The tRNA splicing endonuclease is also involved in mRNA processing via its association with pre-mRNA 3'-end processing factors, establishing a link between pre-tRNA splicing and pre-mRNA 3'-end formation, suggesting that the endonuclease subunits function in multiple RNA-processing events. The sequence is that of tRNA-splicing endonuclease subunit Sen2 (TSEN2) from Gallus gallus (Chicken).